The sequence spans 39 residues: Photosystem II reaction center protein L (39 aa).

Residues 18–38 (SLYLGLLVVFTTGILFSSYFF) form a helical membrane-spanning segment.

This sequence belongs to the PsbL family. PSII is composed of 1 copy each of membrane proteins PsbA, PsbB, PsbC, PsbD, PsbE, PsbF, PsbH, PsbI, PsbJ, PsbK, PsbL, PsbM, PsbT, PsbX, PsbY, PsbZ, Psb30/Ycf12, peripheral proteins PsbO, CyanoQ (PsbQ), PsbU, PsbV and a large number of cofactors. It forms dimeric complexes.

The protein localises to the cellular thylakoid membrane. In terms of biological role, one of the components of the core complex of photosystem II (PSII). PSII is a light-driven water:plastoquinone oxidoreductase that uses light energy to abstract electrons from H(2)O, generating O(2) and a proton gradient subsequently used for ATP formation. It consists of a core antenna complex that captures photons, and an electron transfer chain that converts photonic excitation into a charge separation. This subunit is found at the monomer-monomer interface and is required for correct PSII assembly and/or dimerization. The chain is Photosystem II reaction center protein L from Synechococcus sp. (strain WH7803).